The sequence spans 109 residues: Nucleoid-associated protein HS_1309 (109 aa).

This sequence belongs to the YbaB/EbfC family. As to quaternary structure, homodimer.

The protein resides in the cytoplasm. It is found in the nucleoid. Its function is as follows. Binds to DNA and alters its conformation. May be involved in regulation of gene expression, nucleoid organization and DNA protection. This is Nucleoid-associated protein HS_1309 from Histophilus somni (strain 129Pt) (Haemophilus somnus).